The sequence spans 646 residues: MFQNNPLLAQLKQQLYSQTLRVEGLVKGTEKGFGFLEVDGQKSYFIPPPQMKKVMHGDRITAAIHTDKEKEIAEPEALIEPFLTRFVGRVQKKENDNRLWIIPDHPLLKDTILCRPANQVTHNFENGDWAVAEMRRHPLKGDRGFQAEITGYIIKGDDHYAPWWVTLTRHSLQREAPTMPDCQLDDGSLERIDLTALDFVTIDSATTEDMDDALHIVKNNDGSLKLSIAIADPTAYIKADSELDKIAYQRSFTNYLPGFNIPMLPRELSDDLCSLRPKARRPALVCQVSILEDGQLGDDMQFFAAWVESKFKLAYDDVSDWLEHQTGWKPESEAVTTQITLLQEMCERRNQWRHQYALVFKERPDYRFVLDKGGNVVDIVIDQRRSANRIVEEAMITANLCAAKILRDKLGFGIYNVHTGFEPTQIDQVVDVLKENGIEAEANALLELDGFCQLRRELDQQPTQFLDSRIRRFQTFAEIRPEPGPHFGLGFDAYATWTSPIRKYSDIINHRLLKAIIQQTEEEKPSEEVCLQLTERRRANRMAERDVGDWLYARFLHPHAGTDKTFSAEIVDITRGGLRIRLVDNGAIAFVPGSFLHAVRDELQCSQETGSVLIKGEAVHRLNDIINVRIEEVRMETRNIVARPVA.

Positions R191 to Q518 constitute an RNB domain. The region spanning D563–V645 is the S1 motif domain.

Belongs to the RNR ribonuclease family. RNase II subfamily.

The protein resides in the cytoplasm. The enzyme catalyses Exonucleolytic cleavage in the 3'- to 5'-direction to yield nucleoside 5'-phosphates.. Involved in mRNA degradation. Hydrolyzes single-stranded polyribonucleotides processively in the 3' to 5' direction. The polypeptide is Exoribonuclease 2 (Xenorhabdus bovienii (strain SS-2004) (Xenorhabdus nematophila subsp. bovienii)).